A 369-amino-acid chain; its full sequence is Protein FAM187B (369 aa).

The signal sequence occupies residues 1-17 (MPPMLWLLLNFAAPALG). The Extracellular segment spans residues 18–333 (FYFSISCPSG…PGRADSVLKG (316 aa)). Asparagine 45, asparagine 68, and asparagine 130 each carry an N-linked (GlcNAc...) asparagine glycan. The chain crosses the membrane as a helical span at residues 334-354 (LKLVLLVGTVLVLLGALLKFI). At 355 to 369 (RPSPGKRSKQVLMVK) the chain is on the cytoplasmic side.

It belongs to the FAM187 family.

The protein resides in the membrane. The polypeptide is Protein FAM187B (FAM187B) (Macaca fascicularis (Crab-eating macaque)).